The primary structure comprises 313 residues: Acetyl-coenzyme A carboxylase carboxyl transferase subunit alpha (313 aa).

The 251-residue stretch at 36-286 (RLDKEVKTIY…KEYFLDTLRT (251 aa)) folds into the CoA carboxyltransferase C-terminal domain.

This sequence belongs to the AccA family. As to quaternary structure, acetyl-CoA carboxylase is a heterohexamer composed of biotin carboxyl carrier protein (AccB), biotin carboxylase (AccC) and two subunits each of ACCase subunit alpha (AccA) and ACCase subunit beta (AccD).

It is found in the cytoplasm. The enzyme catalyses N(6)-carboxybiotinyl-L-lysyl-[protein] + acetyl-CoA = N(6)-biotinyl-L-lysyl-[protein] + malonyl-CoA. It functions in the pathway lipid metabolism; malonyl-CoA biosynthesis; malonyl-CoA from acetyl-CoA: step 1/1. Its function is as follows. Component of the acetyl coenzyme A carboxylase (ACC) complex. First, biotin carboxylase catalyzes the carboxylation of biotin on its carrier protein (BCCP) and then the CO(2) group is transferred by the carboxyltransferase to acetyl-CoA to form malonyl-CoA. The protein is Acetyl-coenzyme A carboxylase carboxyl transferase subunit alpha of Helicobacter acinonychis (strain Sheeba).